The following is a 339-amino-acid chain: D-erythrose-4-phosphate dehydrogenase (339 aa).

11 to 12 (RI) lines the NAD(+) pocket. Substrate is bound by residues 158-160 (SCT), Arg-204, 217-218 (TK), and Arg-240. Cys-159 functions as the Nucleophile in the catalytic mechanism. Asn-322 is a binding site for NAD(+).

It belongs to the glyceraldehyde-3-phosphate dehydrogenase family. Epd subfamily. As to quaternary structure, homotetramer.

The protein resides in the cytoplasm. It catalyses the reaction D-erythrose 4-phosphate + NAD(+) + H2O = 4-phospho-D-erythronate + NADH + 2 H(+). Its pathway is cofactor biosynthesis; pyridoxine 5'-phosphate biosynthesis; pyridoxine 5'-phosphate from D-erythrose 4-phosphate: step 1/5. Its function is as follows. Catalyzes the NAD-dependent conversion of D-erythrose 4-phosphate to 4-phosphoerythronate. The polypeptide is D-erythrose-4-phosphate dehydrogenase (Aliivibrio fischeri (strain MJ11) (Vibrio fischeri)).